We begin with the raw amino-acid sequence, 216 residues long: Guanylate kinase (216 aa).

Residues 12–191 (GLLFVISSPS…CVKQVKNILT (180 aa)) enclose the Guanylate kinase-like domain. 19–26 (SPSGAGKS) provides a ligand contact to ATP.

It belongs to the guanylate kinase family.

Its subcellular location is the cytoplasm. The catalysed reaction is GMP + ATP = GDP + ADP. Its function is as follows. Essential for recycling GMP and indirectly, cGMP. The protein is Guanylate kinase of Zymomonas mobilis subsp. mobilis (strain ATCC 31821 / ZM4 / CP4).